A 152-amino-acid polypeptide reads, in one-letter code: Putative membrane protein insertion efficiency factor (152 aa).

The segment at 81 to 152 (AAGGYDPVPG…IVGSGRGPWV (72 aa)) is disordered.

The protein belongs to the UPF0161 family.

The protein resides in the cell membrane. Functionally, could be involved in insertion of integral membrane proteins into the membrane. The chain is Putative membrane protein insertion efficiency factor from Frankia casuarinae (strain DSM 45818 / CECT 9043 / HFP020203 / CcI3).